A 183-amino-acid chain; its full sequence is TATA-box-binding protein 2 (183 aa).

2 consecutive repeat copies span residues 8 to 84 (IENV…AKKL) and 99 to 177 (VQNI…RQQL).

This sequence belongs to the TBP family.

Functionally, general factor that plays a role in the activation of archaeal genes transcribed by RNA polymerase. Binds specifically to the TATA box promoter element which lies close to the position of transcription initiation. The sequence is that of TATA-box-binding protein 2 from Methanosarcina mazei (strain ATCC BAA-159 / DSM 3647 / Goe1 / Go1 / JCM 11833 / OCM 88) (Methanosarcina frisia).